A 277-amino-acid polypeptide reads, in one-letter code: Urease accessory protein UreD (277 aa).

The protein belongs to the UreD family. In terms of assembly, ureD, UreF and UreG form a complex that acts as a GTP-hydrolysis-dependent molecular chaperone, activating the urease apoprotein by helping to assemble the nickel containing metallocenter of UreC. The UreE protein probably delivers the nickel.

The protein resides in the cytoplasm. Functionally, required for maturation of urease via the functional incorporation of the urease nickel metallocenter. This Pseudomonas putida (strain GB-1) protein is Urease accessory protein UreD.